A 1407-amino-acid chain; its full sequence is DNA-directed RNA polymerase subunit beta' (1407 aa).

Zn(2+) is bound by residues cysteine 70, cysteine 72, cysteine 85, and cysteine 88. Mg(2+) is bound by residues aspartate 460, aspartate 462, and aspartate 464. Zn(2+)-binding residues include cysteine 814, cysteine 888, cysteine 895, and cysteine 898.

This sequence belongs to the RNA polymerase beta' chain family. The RNAP catalytic core consists of 2 alpha, 1 beta, 1 beta' and 1 omega subunit. When a sigma factor is associated with the core the holoenzyme is formed, which can initiate transcription. Mg(2+) serves as cofactor. Zn(2+) is required as a cofactor.

The catalysed reaction is RNA(n) + a ribonucleoside 5'-triphosphate = RNA(n+1) + diphosphate. Functionally, DNA-dependent RNA polymerase catalyzes the transcription of DNA into RNA using the four ribonucleoside triphosphates as substrates. The protein is DNA-directed RNA polymerase subunit beta' of Salmonella paratyphi A (strain ATCC 9150 / SARB42).